Reading from the N-terminus, the 520-residue chain is Cytochrome P450 84A1 (520 aa).

M1 carries the N-acetylmethionine modification. The chain crosses the membrane as a helical span at residues 12-32; that stretch reads LSDPTTSLVIVVSLFIFISFI. Residue C458 coordinates heme.

The protein belongs to the cytochrome P450 family. The cofactor is heme.

The protein localises to the membrane. The protein operates within aromatic compound metabolism; phenylpropanoid biosynthesis. This is Cytochrome P450 84A1 (CYP84A1) from Arabidopsis thaliana (Mouse-ear cress).